A 704-amino-acid polypeptide reads, in one-letter code: Translin-associated factor X-interacting protein 1 (704 aa).

The disordered stretch occupies residues 1 to 37 (MANLQERKSFSKPRISIQASGGTPEAKGIEKRKLSQK). 2 coiled-coil regions span residues 190–230 (EISV…AEEY) and 304–342 (RRDL…LQLH).

As to quaternary structure, interacts with TSNAX. In terms of tissue distribution, specifically expressed in testes. Predominantly detected in the post-meiotic stages of germ cells.

Its subcellular location is the cytoplasm. The protein resides in the perinuclear region. Functionally, possible role in spermatogenesis. The polypeptide is Translin-associated factor X-interacting protein 1 (Mus musculus (Mouse)).